The primary structure comprises 575 residues: MNTIFTIILTITILVLSLILKDLLFEGRIKKINKLIPGPSTIPVFGNLLQINAKDFPKSVNDFYERYGKVFRLRLGSVEIVVLTGPEVIDECFNKKHREIFKERYIKFSRFFGKDYNIISSNGDYHYVLRGILTSEITTRKLNNGRLESNKFILEMFSNLCKDNKETLVKNTPNQIRILAVKLILNFTLGIEENDETILIIVEKIKCIFEAAGLLIYSDYLPFLFPLDIKSMSKNDIISSYFFLKDFIGIKLDAIKIKYEKENELKNETTDETSSKLNNIPIIENYYKNYLDGSIHYDSILFSISDIIFAAVDSTSNGFSLLIGQLINKPEIQDKIYEEIMRNDENNNTNNISFADHTKYPYIISVMNESYRYNSSVPITEPNKTTEDVEVNGYKIAKGTMIIKNLRGTHLSKEFWGEDALEFKPERFKNQPLYQKGLFHFGAGPRGCPGGRFTESLTFTFLVIMLKNFKIVNPTDIPIDVEGEVGLAMQCKPFDALFIKHTNRNDFSKINKGLNQQCFTSSSQFPTCYQTEFFEFGFNGNFQLNDGIDCSSGVQQLSFFEKGFVFRVDHFLFEF.

A helical transmembrane segment spans residues 4 to 24 (IFTIILTITILVLSLILKDLL). Position 448 (Cys448) interacts with heme.

It belongs to the cytochrome P450 family. It depends on heme as a cofactor.

Its subcellular location is the membrane. The polypeptide is Probable cytochrome P450 514A1 (cyp514A1) (Dictyostelium discoideum (Social amoeba)).